The following is a 366-amino-acid chain: UDP-N-acetylglucosamine--N-acetylmuramyl-(pentapeptide) pyrophosphoryl-undecaprenol N-acetylglucosamine transferase (366 aa).

Residues 10–12 (TGG), Asn-124, Arg-165, Ser-195, Ile-250, and Gln-295 each bind UDP-N-acetyl-alpha-D-glucosamine.

This sequence belongs to the glycosyltransferase 28 family. MurG subfamily.

The protein resides in the cell inner membrane. It carries out the reaction di-trans,octa-cis-undecaprenyl diphospho-N-acetyl-alpha-D-muramoyl-L-alanyl-D-glutamyl-meso-2,6-diaminopimeloyl-D-alanyl-D-alanine + UDP-N-acetyl-alpha-D-glucosamine = di-trans,octa-cis-undecaprenyl diphospho-[N-acetyl-alpha-D-glucosaminyl-(1-&gt;4)]-N-acetyl-alpha-D-muramoyl-L-alanyl-D-glutamyl-meso-2,6-diaminopimeloyl-D-alanyl-D-alanine + UDP + H(+). The protein operates within cell wall biogenesis; peptidoglycan biosynthesis. Functionally, cell wall formation. Catalyzes the transfer of a GlcNAc subunit on undecaprenyl-pyrophosphoryl-MurNAc-pentapeptide (lipid intermediate I) to form undecaprenyl-pyrophosphoryl-MurNAc-(pentapeptide)GlcNAc (lipid intermediate II). The sequence is that of UDP-N-acetylglucosamine--N-acetylmuramyl-(pentapeptide) pyrophosphoryl-undecaprenol N-acetylglucosamine transferase from Thermodesulfovibrio yellowstonii (strain ATCC 51303 / DSM 11347 / YP87).